The chain runs to 205 residues: Large ribosomal subunit protein uL4 (205 aa).

The segment covering 43–60 has biased composition (polar residues); it reads ARSGNRAQQTRAEVSAST. Residues 43 to 96 are disordered; sequence ARSGNRAQQTRAEVSASTHKPWRQKGTGRARSGRASSPIWRGGGVTFPNKPNEN. Residues 62–74 are compositionally biased toward basic residues; the sequence is KPWRQKGTGRARS.

The protein belongs to the universal ribosomal protein uL4 family. As to quaternary structure, part of the 50S ribosomal subunit.

In terms of biological role, one of the primary rRNA binding proteins, this protein initially binds near the 5'-end of the 23S rRNA. It is important during the early stages of 50S assembly. It makes multiple contacts with different domains of the 23S rRNA in the assembled 50S subunit and ribosome. Its function is as follows. Forms part of the polypeptide exit tunnel. The sequence is that of Large ribosomal subunit protein uL4 from Thiobacillus denitrificans (strain ATCC 25259 / T1).